A 214-amino-acid polypeptide reads, in one-letter code: Large ribosomal subunit protein bL25 (214 aa).

A disordered region spans residues 187 to 214 (AEVAPSIEETVEPEVIKKGKKAEEEEEK). The span at 200 to 214 (EVIKKGKKAEEEEEK) shows a compositional bias: basic and acidic residues.

It belongs to the bacterial ribosomal protein bL25 family. CTC subfamily. In terms of assembly, part of the 50S ribosomal subunit; part of the 5S rRNA/L5/L18/L25 subcomplex. Contacts the 5S rRNA. Binds to the 5S rRNA independently of L5 and L18.

Its function is as follows. This is one of the proteins that binds to the 5S RNA in the ribosome where it forms part of the central protuberance. The chain is Large ribosomal subunit protein bL25 from Thermodesulfovibrio yellowstonii (strain ATCC 51303 / DSM 11347 / YP87).